The sequence spans 109 residues: Stress-response A/B barrel domain-containing protein HS1 (109 aa).

One can recognise a Stress-response A/B barrel domain in the interval valine 8–tyrosine 102. 4 residues coordinate Mg(2+): valine 36, isoleucine 39, glutamate 40, and methionine 42.

As to quaternary structure, homodimer. Mg(2+) is required as a cofactor.

Its function is as follows. Heat stable protein involved in defense against fungal pathogens. Possesses antifungal activity against diverse pathogenic fungi. Possesses antimicrobial activity. Possesses ribonuclease activity. This is Stress-response A/B barrel domain-containing protein HS1 from Arabidopsis thaliana (Mouse-ear cress).